The following is a 103-amino-acid chain: Large ribosomal subunit protein bL21 (103 aa).

Belongs to the bacterial ribosomal protein bL21 family. As to quaternary structure, part of the 50S ribosomal subunit. Contacts protein L20.

Functionally, this protein binds to 23S rRNA in the presence of protein L20. This Wigglesworthia glossinidia brevipalpis protein is Large ribosomal subunit protein bL21.